The chain runs to 171 residues: Arginine repressor (171 aa).

The protein belongs to the ArgR family.

The protein resides in the cytoplasm. It participates in amino-acid biosynthesis; L-arginine biosynthesis [regulation]. In terms of biological role, regulates arginine biosynthesis genes. The protein is Arginine repressor (argR) of Corynebacterium glutamicum (strain ATCC 13032 / DSM 20300 / JCM 1318 / BCRC 11384 / CCUG 27702 / LMG 3730 / NBRC 12168 / NCIMB 10025 / NRRL B-2784 / 534).